A 201-amino-acid chain; its full sequence is FMN-dependent NADH:quinone oxidoreductase (201 aa).

FMN is bound by residues S9 and 16–18 (SYS).

This sequence belongs to the azoreductase type 1 family. Homodimer. It depends on FMN as a cofactor.

The catalysed reaction is 2 a quinone + NADH + H(+) = 2 a 1,4-benzosemiquinone + NAD(+). It catalyses the reaction N,N-dimethyl-1,4-phenylenediamine + anthranilate + 2 NAD(+) = 2-(4-dimethylaminophenyl)diazenylbenzoate + 2 NADH + 2 H(+). Functionally, quinone reductase that provides resistance to thiol-specific stress caused by electrophilic quinones. Its function is as follows. Also exhibits azoreductase activity. Catalyzes the reductive cleavage of the azo bond in aromatic azo compounds to the corresponding amines. The polypeptide is FMN-dependent NADH:quinone oxidoreductase (Mesomycoplasma hyopneumoniae (strain 232) (Mycoplasma hyopneumoniae)).